We begin with the raw amino-acid sequence, 981 residues long: Polyhomeotic-like protein 3 (981 aa).

Residues 1-28 are compositionally biased toward low complexity; that stretch reads MDSEPSSGTSVSTTASSTTTTTITTSSS. Disordered regions lie at residues 1–33, 102–127, 224–280, and 307–407; these read MDSE…MQQP, LSSG…TSIL, LSSS…TAVT, and QIPL…SQSP. The span at 224–255 shows a compositional bias: polar residues; that stretch reads LSSSQNGSPKSAGQTQSLTICHNKTTVTSSKI. Phosphoserine is present on residues Ser-231, Ser-261, Ser-269, and Ser-312. Residues 256–266 show a composition bias toward basic and acidic residues; the sequence is SQRDPSPESKK. A compositionally biased stretch (low complexity) spans 321–340; it reads QLLLQQQQQQIQPITLQSPS. A compositionally biased stretch (polar residues) spans 360–373; that stretch reads APSNAQPQHCSPVQ. Over residues 381–395 the composition is skewed to low complexity; that stretch reads VSPNQAQSAQQSVVV. 2 positions are modified to phosphothreonine: Thr-607 and Thr-612. Ser-614 carries the post-translational modification Phosphoserine. Positions 650-690 are disordered; sequence KSPSDPTHASAPAPPLLIPAASTRSSSTSLASSTPSLENKP. Residues 667-686 show a composition bias toward low complexity; the sequence is IPAASTRSSSTSLASSTPSL. Residues Lys-689 and Lys-730 each participate in a glycyl lysine isopeptide (Lys-Gly) (interchain with G-Cter in SUMO2) cross-link. The short motif at 689–718 is the HD1 element; the sequence is KPPQAIVKPQILTHVIEGFVIQEGLEPFPV. Residues Ser-759 and Ser-760 each carry the phosphoserine modification. The FCS-type zinc-finger motif lies at 774 to 808; that stretch reads EEMDSELLKCEFCGKMGYPNEFLRSKRFCTMSCAK. Zn(2+)-binding residues include Cys-783, Cys-786, Cys-802, and Cys-806. Lys-808 participates in a covalent cross-link: Glycyl lysine isopeptide (Lys-Gly) (interchain with G-Cter in SUMO2). 2 disordered regions span residues 825–844 and 863–888; these read RKPD…GPEG and EDVA…ERER. The SAM domain occupies 917-981; the sequence is WTVDDVWAFI…CARINSLKDS (65 aa).

In terms of assembly, component of a PRC1-like complex. As to expression, ubiquitous expression.

It localises to the nucleus. Its function is as follows. Component of a Polycomb group (PcG) multiprotein PRC1-like complex, a complex class required to maintain the transcriptionally repressive state of many genes, including Hox genes, throughout development. PcG PRC1 complex acts via chromatin remodeling and modification of histones; it mediates monoubiquitination of histone H2A 'Lys-119', rendering chromatin heritably changed in its expressibility. This chain is Polyhomeotic-like protein 3 (Phc3), found in Mus musculus (Mouse).